Here is a 183-residue protein sequence, read N- to C-terminus: Glutathione-regulated potassium-efflux system ancillary protein KefG (183 aa).

This sequence belongs to the NAD(P)H dehydrogenase (quinone) family. KefG subfamily. In terms of assembly, interacts with KefB.

The protein localises to the cell inner membrane. It catalyses the reaction a quinone + NADH + H(+) = a quinol + NAD(+). The catalysed reaction is a quinone + NADPH + H(+) = a quinol + NADP(+). Functionally, regulatory subunit of a potassium efflux system that confers protection against electrophiles. Required for full activity of KefB. This Salmonella paratyphi C (strain RKS4594) protein is Glutathione-regulated potassium-efflux system ancillary protein KefG.